Here is a 259-residue protein sequence, read N- to C-terminus: Tegument protein UL51 homolog (259 aa).

Cys-9 carries S-palmitoyl cysteine; by host lipidation.

This sequence belongs to the herpesviridae UL51 family. Oligomerizes. Interacts with ORF53; this interaction mediates ORF53 incorporation to virions. Phosphorylated. Post-translationally, palmitoylation is necessary for Golgi localization.

Its subcellular location is the virion tegument. It is found in the host cytoplasm. It localises to the host Golgi apparatus. Plays several roles during the time course of infection, including egress of virus particles from the perinuclear space and secondary envelopment of cytoplasmic capsids that bud into specific trans-Golgi network (TGN)-derived membranes. This chain is Tegument protein UL51 homolog, found in Varicella-zoster virus (strain Dumas) (HHV-3).